The sequence spans 88 residues: Large ribosomal subunit protein bL31 (88 aa).

The segment at 67-88 (MGSVDNATSEKKSATDETSKES) is disordered. Residues 74–88 (TSEKKSATDETSKES) show a composition bias toward basic and acidic residues.

The protein belongs to the bacterial ribosomal protein bL31 family. Type A subfamily. Part of the 50S ribosomal subunit.

Its function is as follows. Binds the 23S rRNA. The protein is Large ribosomal subunit protein bL31 of Synechococcus sp. (strain CC9311).